The following is a 913-amino-acid chain: Probable TonB-dependent receptor HI_1217 (913 aa).

Residues 1–27 (MKKAIKLNLITLGLINTIGMTITQAQA) form the signal peptide. A TBDR plug domain is found at 42–165 (SNDKKPFTEA…LAGSANFRTL (124 aa)). Residues 176-913 (PFGIILKGMT…TYILSLNYKF (738 aa)) enclose the TBDR beta-barrel domain. A TonB C-terminal box motif is present at residues 896–913 (LYNFARGRTYILSLNYKF).

This sequence belongs to the TonB-dependent receptor family.

The protein resides in the cell outer membrane. Functionally, probable receptor, TonB-dependent. This is Probable TonB-dependent receptor HI_1217 from Haemophilus influenzae (strain ATCC 51907 / DSM 11121 / KW20 / Rd).